A 448-amino-acid chain; its full sequence is Probable glycine dehydrogenase (decarboxylating) subunit 1 (448 aa).

The protein belongs to the GcvP family. N-terminal subunit subfamily. The glycine cleavage system is composed of four proteins: P, T, L and H. In this organism, the P 'protein' is a heterodimer of two subunits.

It carries out the reaction N(6)-[(R)-lipoyl]-L-lysyl-[glycine-cleavage complex H protein] + glycine + H(+) = N(6)-[(R)-S(8)-aminomethyldihydrolipoyl]-L-lysyl-[glycine-cleavage complex H protein] + CO2. The glycine cleavage system catalyzes the degradation of glycine. The P protein binds the alpha-amino group of glycine through its pyridoxal phosphate cofactor; CO(2) is released and the remaining methylamine moiety is then transferred to the lipoamide cofactor of the H protein. This chain is Probable glycine dehydrogenase (decarboxylating) subunit 1 (gcvPA), found in Bacillus subtilis (strain 168).